The sequence spans 100 residues: Putative protein BCL8 (100 aa).

Expressed in prostate and testis.

In Homo sapiens (Human), this protein is Putative protein BCL8 (NBEAP1).